A 217-amino-acid chain; its full sequence is Nascent polypeptide-associated complex subunit alpha (217 aa).

Residues 1–45 (MPELTEIKSEAAPSTSAEAKPEDVRVEDDGSDSDSDGGMPGLEEA) are disordered. The segment covering 19–28 (AKPEDVRVED) has biased composition (basic and acidic residues). The NAC-A/B domain occupies 70-135 (SRGEKKARKI…AKIEDLSQQA (66 aa)). Residues 154-177 (SVGATTSVAPIAEEDEEDVDDTGV) are disordered. Over residues 165 to 176 (AEEDEEDVDDTG) the composition is skewed to acidic residues. The UBA domain occupies 177–217 (VDEKDIELVITQANTTRAKAIKALKNNNNDIVNAIMELTML).

It belongs to the NAC-alpha family. As to quaternary structure, part of the nascent polypeptide-associated complex (NAC), consisting of Nac-alpha and bicaudal (bic).

Functionally, may promote appropriate targeting of ribosome-nascent polypeptide complexes. Required for correct localization of the osk/oskar protein to the posterior pole during embryonic development. The osk protein directs the recruitment of molecules responsible for posterior body patterning and germline formation in the embryo. This chain is Nascent polypeptide-associated complex subunit alpha (Nacalpha), found in Drosophila melanogaster (Fruit fly).